The chain runs to 372 residues: MPNQHTMASSNLLPVGSNISTWWNFGSMLLTCLALQTLTGFFLAIHYTANINLAFSSVTHIVRDVPYGWIMQNMHAIGASMFFICIYTHIARGLYYGLYLNKEVWLSGTALLIVLMATAFFGYVLPWGQMSFWAATVITNLLTAIPYMGPKLTTWFWGGFSINDPTLTRFFALHFILPFLIISLSSIHIMLLHNEGSNNPLGTNPDIDKIPFHPYHSYKDMFIITTMIATLFIIMSFMPNLFNDPENFSKANPLVTPQHIKPEWYFLFAYGILRSIPNKLGGTMALLMSVLILTTMPFTHTSHIRSLTFRPITQVVFWTFIATFITITWTATKPVEPPFILISQMASSMYFLFFIIHPLLGWVENKIMMINH.

4 helical membrane-spanning segments follow: residues 25 to 45 (FGSM…FLAI), 69 to 90 (WIMQ…YTHI), 105 to 125 (WLSG…GYVL), and 170 to 190 (FFAL…IHIM). The heme b site is built by histidine 75 and histidine 89. Residues histidine 174 and histidine 188 each contribute to the heme b site. Histidine 193 is a binding site for a ubiquinone. 4 consecutive transmembrane segments (helical) span residues 218–238 (YKDM…MSFM), 280–300 (LGGT…PFTH), 312–332 (ITQV…WTAT), and 339–358 (FILI…IIHP).

It belongs to the cytochrome b family. The cytochrome bc1 complex contains 3 respiratory subunits (MT-CYB, CYC1 and UQCRFS1), 2 core proteins (UQCRC1 and UQCRC2) and probably 6 low-molecular weight proteins. It depends on heme b as a cofactor.

It localises to the mitochondrion inner membrane. Its function is as follows. Component of the ubiquinol-cytochrome c reductase complex (complex III or cytochrome b-c1 complex) that is part of the mitochondrial respiratory chain. The b-c1 complex mediates electron transfer from ubiquinol to cytochrome c. Contributes to the generation of a proton gradient across the mitochondrial membrane that is then used for ATP synthesis. The protein is Cytochrome b (MT-CYB) of Pseudechis australis (Mulga snake).